The sequence spans 919 residues: Isoleucine--tRNA ligase (919 aa).

Residues P59–H69 carry the 'HIGH' region motif. E570 is a binding site for L-isoleucyl-5'-AMP. The short motif at K611–S615 is the 'KMSKS' region element. K614 provides a ligand contact to ATP. The Zn(2+) site is built by C893, C896, C908, and C911.

This sequence belongs to the class-I aminoacyl-tRNA synthetase family. IleS type 1 subfamily. Monomer. The cofactor is Zn(2+).

The protein resides in the cytoplasm. The catalysed reaction is tRNA(Ile) + L-isoleucine + ATP = L-isoleucyl-tRNA(Ile) + AMP + diphosphate. Its function is as follows. Catalyzes the attachment of isoleucine to tRNA(Ile). As IleRS can inadvertently accommodate and process structurally similar amino acids such as valine, to avoid such errors it has two additional distinct tRNA(Ile)-dependent editing activities. One activity is designated as 'pretransfer' editing and involves the hydrolysis of activated Val-AMP. The other activity is designated 'posttransfer' editing and involves deacylation of mischarged Val-tRNA(Ile). The protein is Isoleucine--tRNA ligase of Campylobacter curvus (strain 525.92).